The following is a 264-amino-acid chain: Thymidylate synthase (264 aa).

R21 contributes to the dUMP binding site. Position 51 (H51) interacts with (6R)-5,10-methylene-5,6,7,8-tetrahydrofolate. 126-127 contributes to the dUMP binding site; it reads RR. The active-site Nucleophile is the C146. DUMP-binding positions include 166 to 169, N177, and 207 to 209; these read RSAD and HLY. A (6R)-5,10-methylene-5,6,7,8-tetrahydrofolate-binding site is contributed by D169. Residue A263 participates in (6R)-5,10-methylene-5,6,7,8-tetrahydrofolate binding.

It belongs to the thymidylate synthase family. Bacterial-type ThyA subfamily. Homodimer.

The protein localises to the cytoplasm. It catalyses the reaction dUMP + (6R)-5,10-methylene-5,6,7,8-tetrahydrofolate = 7,8-dihydrofolate + dTMP. The protein operates within pyrimidine metabolism; dTTP biosynthesis. Catalyzes the reductive methylation of 2'-deoxyuridine-5'-monophosphate (dUMP) to 2'-deoxythymidine-5'-monophosphate (dTMP) while utilizing 5,10-methylenetetrahydrofolate (mTHF) as the methyl donor and reductant in the reaction, yielding dihydrofolate (DHF) as a by-product. This enzymatic reaction provides an intracellular de novo source of dTMP, an essential precursor for DNA biosynthesis. This is Thymidylate synthase from Aromatoleum aromaticum (strain DSM 19018 / LMG 30748 / EbN1) (Azoarcus sp. (strain EbN1)).